The sequence spans 279 residues: Putative pyruvate, phosphate dikinase regulatory protein (279 aa).

156-163 (GISRVGKT) provides a ligand contact to ADP.

It belongs to the pyruvate, phosphate/water dikinase regulatory protein family. PDRP subfamily.

The catalysed reaction is N(tele)-phospho-L-histidyl/L-threonyl-[pyruvate, phosphate dikinase] + ADP = N(tele)-phospho-L-histidyl/O-phospho-L-threonyl-[pyruvate, phosphate dikinase] + AMP + H(+). The enzyme catalyses N(tele)-phospho-L-histidyl/O-phospho-L-threonyl-[pyruvate, phosphate dikinase] + phosphate + H(+) = N(tele)-phospho-L-histidyl/L-threonyl-[pyruvate, phosphate dikinase] + diphosphate. In terms of biological role, bifunctional serine/threonine kinase and phosphorylase involved in the regulation of the pyruvate, phosphate dikinase (PPDK) by catalyzing its phosphorylation/dephosphorylation. In Chloroflexus aurantiacus (strain ATCC 29366 / DSM 635 / J-10-fl), this protein is Putative pyruvate, phosphate dikinase regulatory protein.